The chain runs to 182 residues: tRNA-splicing endonuclease (182 aa).

Catalysis depends on residues Y119, H127, and K158.

The protein belongs to the tRNA-intron endonuclease family. Archaeal short subfamily. Homotetramer; although the tetramer contains four active sites, only two participate in the cleavage. Therefore, it should be considered as a dimer of dimers.

It carries out the reaction pretRNA = a 3'-half-tRNA molecule with a 5'-OH end + a 5'-half-tRNA molecule with a 2',3'-cyclic phosphate end + an intron with a 2',3'-cyclic phosphate and a 5'-hydroxyl terminus.. Its function is as follows. Endonuclease that removes tRNA introns. Cleaves pre-tRNA at the 5'- and 3'-splice sites to release the intron. The products are an intron and two tRNA half-molecules bearing 2',3' cyclic phosphate and 5'-OH termini. Recognizes a pseudosymmetric substrate in which 2 bulged loops of 3 bases are separated by a stem of 4 bp. The sequence is that of tRNA-splicing endonuclease from Saccharolobus islandicus (strain M.14.25 / Kamchatka #1) (Sulfolobus islandicus).